A 111-amino-acid polypeptide reads, in one-letter code: Small ribosomal subunit protein uS17 (111 aa).

Belongs to the universal ribosomal protein uS17 family. In terms of assembly, part of the 30S ribosomal subunit.

Its function is as follows. One of the primary rRNA binding proteins, it binds specifically to the 5'-end of 16S ribosomal RNA. The protein is Small ribosomal subunit protein uS17 of Archaeoglobus fulgidus (strain ATCC 49558 / DSM 4304 / JCM 9628 / NBRC 100126 / VC-16).